A 324-amino-acid polypeptide reads, in one-letter code: UDP-N-acetylenolpyruvoylglucosamine reductase (324 aa).

The region spanning 36–203 (FRAGGLAELM…THAIFEGYAE (168 aa)) is the FAD-binding PCMH-type domain. Residue R183 is part of the active site. The active-site Proton donor is S232. The active site involves E302.

This sequence belongs to the MurB family. Requires FAD as cofactor.

It localises to the cytoplasm. The enzyme catalyses UDP-N-acetyl-alpha-D-muramate + NADP(+) = UDP-N-acetyl-3-O-(1-carboxyvinyl)-alpha-D-glucosamine + NADPH + H(+). The protein operates within cell wall biogenesis; peptidoglycan biosynthesis. Its function is as follows. Cell wall formation. The chain is UDP-N-acetylenolpyruvoylglucosamine reductase from Rhizobium meliloti (strain 1021) (Ensifer meliloti).